A 317-amino-acid chain; its full sequence is Transaldolase (317 aa).

Catalysis depends on lysine 126, which acts as the Schiff-base intermediate with substrate.

It belongs to the transaldolase family. Type 1 subfamily. As to quaternary structure, homodimer.

The protein localises to the cytoplasm. The catalysed reaction is D-sedoheptulose 7-phosphate + D-glyceraldehyde 3-phosphate = D-erythrose 4-phosphate + beta-D-fructose 6-phosphate. Its pathway is carbohydrate degradation; pentose phosphate pathway; D-glyceraldehyde 3-phosphate and beta-D-fructose 6-phosphate from D-ribose 5-phosphate and D-xylulose 5-phosphate (non-oxidative stage): step 2/3. Functionally, transaldolase is important for the balance of metabolites in the pentose-phosphate pathway. The polypeptide is Transaldolase (Burkholderia orbicola (strain AU 1054)).